A 404-amino-acid chain; its full sequence is Sialidase (404 aa).

An N-terminal signal peptide occupies residues 1–27 (MKKFIKILKVLSMAIVLSACNINGIFA). Arg-55 contacts substrate. Asp-80 acts as the Proton acceptor in catalysis. 3 BNR repeats span residues 89–100 (AKSTDNGQTWDY), 158–169 (VYSDDNGETWSD), and 226–237 (IYSKDNGETWTM). Arg-263 lines the substrate pocket. Residues 273–284 (YISYDMGSTWEV) form a BNR 4 repeat. The active-site Nucleophile is the Tyr-365.

The protein belongs to the glycosyl hydrolase 33 family. Post-translationally, it is possible that the sialidase is cleaved in front of a cysteine within the leader peptide, forming a glyceride thioether bond which links the protein to the membrane. A second proteolytic cleavage releases the mature extracellular protein.

It localises to the secreted. It catalyses the reaction Hydrolysis of alpha-(2-&gt;3)-, alpha-(2-&gt;6)-, alpha-(2-&gt;8)- glycosidic linkages of terminal sialic acid residues in oligosaccharides, glycoproteins, glycolipids, colominic acid and synthetic substrates.. Sialidases have been suggested to be pathogenic factors in microbial infections. The protein is Sialidase of Paraclostridium sordellii (Clostridium sordellii).